Consider the following 1479-residue polypeptide: Putative receptor-type tyrosine-protein phosphatase mosPTP-1 (1479 aa).

The signal sequence occupies residues 1-28 (MKPRLLTTVTTWLALVLPVVYLSRPCQA). The Extracellular portion of the chain corresponds to 29-365 (LPTVNFTANY…RQSYNDYNLA (337 aa)). 7 N-linked (GlcNAc...) asparagine glycosylation sites follow: N33, N40, N146, N182, N248, N294, and N306. Fibronectin type-III domains lie at 143 to 242 (KPLN…AGPS) and 243 to 346 (APKV…VQLN). A helical membrane pass occupies residues 366–386 (VMIGILICCFGLLFIVLTILL). The Cytoplasmic portion of the chain corresponds to 387–1479 (WKKCFHAAYY…AKLRAVVRVE (1093 aa)). 2 consecutive Tyrosine-protein phosphatase domains span residues 452–717 (FSKE…LVEA) and 740–992 (IDSQ…LSYM). C658 serves as the catalytic Phosphocysteine intermediate.

It belongs to the protein-tyrosine phosphatase family. Receptor class subfamily. In terms of assembly, interacts with C-type lectin mosGCTL-1. Interacts with C-type lectin mosGCTL-7.

It localises to the cell membrane. The enzyme catalyses O-phospho-L-tyrosyl-[protein] + H2O = L-tyrosyl-[protein] + phosphate. Its function is as follows. Putative protein tyrosine-protein phosphatase. Functionally, (Microbial infection) Facilitates West Nile virus infection in mosquitoes. In Culex quinquefasciatus (Southern house mosquito), this protein is Putative receptor-type tyrosine-protein phosphatase mosPTP-1.